The sequence spans 215 residues: Protein Thf1 (215 aa).

Residues 182-213 (ERMDQAVELVEETIAAEKRKKERRLEEQAQRT) adopt a coiled-coil conformation.

This sequence belongs to the THF1 family.

Functionally, may be involved in photosynthetic membrane biogenesis. The protein is Protein Thf1 of Synechococcus sp. (strain CC9605).